Here is a 66-residue protein sequence, read N- to C-terminus: Alpha-conotoxin RegIIA (66 aa).

The first 21 residues, 1–21, serve as a signal peptide directing secretion; it reads MGMRMMFTVFLLVVLTTTVVS. A propeptide spanning residues 22 to 49 is cleaved from the precursor; the sequence is STSVRASDGRNAAADNRASDLIAQIVRR. Disulfide bonds link Cys-51–Cys-57 and Cys-52–Cys-65. The segment at 53–55 is ser-Xaa-Pro motif, crucial for potent interaction with nAChR; that stretch reads SHP. The residue at position 65 (Cys-65) is a Cysteine amide.

Belongs to the conotoxin A superfamily. As to expression, expressed by the venom duct.

Its subcellular location is the secreted. Its function is as follows. Alpha-conotoxins act on postsynaptic membranes, they bind to the nicotinic acetylcholine receptors (nAChR) and thus inhibit them. This toxin potently inhibits alpha-3 containing subunit nAChR. It inhibits alpha-3-beta-2/CHRNA3-CHRNB2 (IC(50)=10.7-33 nM (rat)/132.4-704.1 nM (human)) and alpha-3-beta-4/CHRNA3-CHRNB4 (IC(50)=47.3-97 nM (rat)/52.1 nM (human)). It also inhibits alpha-7/CHRNA7 nAChR with IC(50)=103-210 nM (human)/41-61.2 nM (rat) nAChRs. It is more potent on alpha-3-beta-2 receptors in human than in rat, due to a variation (Pro vs Gln) in alpha-3 subunit in these orthologs. Conversely, does not show species-specific differences in sensitivity at the alpha-3-beta-4 receptor. In Conus regius (Crown cone), this protein is Alpha-conotoxin RegIIA.